Reading from the N-terminus, the 444-residue chain is Xaa-Pro dipeptidase (444 aa).

The Mn(2+) site is built by Asp-247, Asp-258, His-340, Glu-385, and Glu-424.

This sequence belongs to the peptidase M24B family. Bacterial-type prolidase subfamily. Requires Mn(2+) as cofactor.

It carries out the reaction Xaa-L-Pro dipeptide + H2O = an L-alpha-amino acid + L-proline. Its function is as follows. Splits dipeptides with a prolyl residue in the C-terminal position. The polypeptide is Xaa-Pro dipeptidase (Proteus mirabilis (strain HI4320)).